The primary structure comprises 321 residues: Lipoyl synthase (321 aa).

The [4Fe-4S] cluster site is built by Cys-60, Cys-65, Cys-71, Cys-86, Cys-90, Cys-93, and Ser-299. In terms of domain architecture, Radical SAM core spans 72 to 288; that stretch reads WEKKHATFMI…ETIGRTKGFL (217 aa).

Belongs to the radical SAM superfamily. Lipoyl synthase family. [4Fe-4S] cluster is required as a cofactor.

The protein localises to the cytoplasm. The catalysed reaction is [[Fe-S] cluster scaffold protein carrying a second [4Fe-4S](2+) cluster] + N(6)-octanoyl-L-lysyl-[protein] + 2 oxidized [2Fe-2S]-[ferredoxin] + 2 S-adenosyl-L-methionine + 4 H(+) = [[Fe-S] cluster scaffold protein] + N(6)-[(R)-dihydrolipoyl]-L-lysyl-[protein] + 4 Fe(3+) + 2 hydrogen sulfide + 2 5'-deoxyadenosine + 2 L-methionine + 2 reduced [2Fe-2S]-[ferredoxin]. It functions in the pathway protein modification; protein lipoylation via endogenous pathway; protein N(6)-(lipoyl)lysine from octanoyl-[acyl-carrier-protein]: step 2/2. Its function is as follows. Catalyzes the radical-mediated insertion of two sulfur atoms into the C-6 and C-8 positions of the octanoyl moiety bound to the lipoyl domains of lipoate-dependent enzymes, thereby converting the octanoylated domains into lipoylated derivatives. The polypeptide is Lipoyl synthase (Mesorhizobium japonicum (strain LMG 29417 / CECT 9101 / MAFF 303099) (Mesorhizobium loti (strain MAFF 303099))).